Consider the following 95-residue polypeptide: Aspartyl/glutamyl-tRNA(Asn/Gln) amidotransferase subunit C (95 aa).

Belongs to the GatC family. Heterotrimer of A, B and C subunits.

It carries out the reaction L-glutamyl-tRNA(Gln) + L-glutamine + ATP + H2O = L-glutaminyl-tRNA(Gln) + L-glutamate + ADP + phosphate + H(+). The catalysed reaction is L-aspartyl-tRNA(Asn) + L-glutamine + ATP + H2O = L-asparaginyl-tRNA(Asn) + L-glutamate + ADP + phosphate + 2 H(+). In terms of biological role, allows the formation of correctly charged Asn-tRNA(Asn) or Gln-tRNA(Gln) through the transamidation of misacylated Asp-tRNA(Asn) or Glu-tRNA(Gln) in organisms which lack either or both of asparaginyl-tRNA or glutaminyl-tRNA synthetases. The reaction takes place in the presence of glutamine and ATP through an activated phospho-Asp-tRNA(Asn) or phospho-Glu-tRNA(Gln). The protein is Aspartyl/glutamyl-tRNA(Asn/Gln) amidotransferase subunit C of Nitratidesulfovibrio vulgaris (strain DSM 19637 / Miyazaki F) (Desulfovibrio vulgaris).